A 217-amino-acid polypeptide reads, in one-letter code: Probable GTP-binding protein EngB (217 aa).

The EngB-type G domain occupies 24-207; it reads SQPEICFAGR…HALIESWLIP (184 aa). GTP is bound by residues 32 to 39, 59 to 63, 81 to 84, 148 to 151, and 185 to 188; these read GRSNAGKS, GRTQH, DLPG, TKCD, and LFSA. Mg(2+)-binding residues include S39 and T61.

It belongs to the TRAFAC class TrmE-Era-EngA-EngB-Septin-like GTPase superfamily. EngB GTPase family. The cofactor is Mg(2+).

In terms of biological role, necessary for normal cell division and for the maintenance of normal septation. The polypeptide is Probable GTP-binding protein EngB (Paraburkholderia xenovorans (strain LB400)).